A 255-amino-acid chain; its full sequence is Putative Myb family transcription factor At1g14600 (255 aa).

In terms of domain architecture, HTH myb-type spans 20 to 80 (RSPVPRLRWT…HLQMYRGSRI (61 aa)). A DNA-binding region (H-T-H motif) is located at residues 51-76 (PKLVLKIMDVKGLTISHVKSHLQMYR). The interval 80–110 (ITLLGKPEESSSPSSRRRRRQDNEEDHLHDN) is disordered.

It is found in the nucleus. In terms of biological role, putative transcription factor. This is Putative Myb family transcription factor At1g14600 from Arabidopsis thaliana (Mouse-ear cress).